The following is a 231-amino-acid chain: Coproheme decarboxylase (231 aa).

Lys-44 is covalently cross-linked (Isoglutamyl lysine isopeptide (Lys-Gln) (interchain with Q-Cter in protein Pup)). Residue Tyr-133 is part of the active site. His-156 serves as a coordination point for Fe-coproporphyrin III.

The protein belongs to the ChdC family. Type 2 subfamily. Fe-coproporphyrin III is required as a cofactor.

It carries out the reaction Fe-coproporphyrin III + 2 H2O2 + 2 H(+) = heme b + 2 CO2 + 4 H2O. It catalyses the reaction Fe-coproporphyrin III + H2O2 + H(+) = harderoheme III + CO2 + 2 H2O. The enzyme catalyses harderoheme III + H2O2 + H(+) = heme b + CO2 + 2 H2O. Its pathway is porphyrin-containing compound metabolism; protoheme biosynthesis. Functionally, involved in coproporphyrin-dependent heme b biosynthesis. Catalyzes the decarboxylation of Fe-coproporphyrin III (coproheme) to heme b (protoheme IX), the last step of the pathway. The reaction occurs in a stepwise manner with a three-propionate intermediate. This is Coproheme decarboxylase from Mycolicibacterium smegmatis (strain ATCC 700084 / mc(2)155) (Mycobacterium smegmatis).